Here is a 126-residue protein sequence, read N- to C-terminus: Fluoride-specific ion channel FluC (126 aa).

Transmembrane regions (helical) follow at residues 6-26, 32-52, 68-90, and 102-122; these read VLLV…VALA, TGFP…IGFI, LLLT…ETGG, and LYVA…TLLA. Positions 76 and 79 each coordinate Na(+).

Belongs to the fluoride channel Fluc/FEX (TC 1.A.43) family.

Its subcellular location is the cell inner membrane. The enzyme catalyses fluoride(in) = fluoride(out). With respect to regulation, na(+) is not transported, but it plays an essential structural role and its presence is essential for fluoride channel function. Fluoride-specific ion channel. Important for reducing fluoride concentration in the cell, thus reducing its toxicity. The sequence is that of Fluoride-specific ion channel FluC from Chlorobaculum tepidum (strain ATCC 49652 / DSM 12025 / NBRC 103806 / TLS) (Chlorobium tepidum).